Here is a 226-residue protein sequence, read N- to C-terminus: 2-C-methyl-D-erythritol 4-phosphate cytidylyltransferase (226 aa).

This sequence belongs to the IspD/TarI cytidylyltransferase family. IspD subfamily.

It catalyses the reaction 2-C-methyl-D-erythritol 4-phosphate + CTP + H(+) = 4-CDP-2-C-methyl-D-erythritol + diphosphate. It functions in the pathway isoprenoid biosynthesis; isopentenyl diphosphate biosynthesis via DXP pathway; isopentenyl diphosphate from 1-deoxy-D-xylulose 5-phosphate: step 2/6. Catalyzes the formation of 4-diphosphocytidyl-2-C-methyl-D-erythritol from CTP and 2-C-methyl-D-erythritol 4-phosphate (MEP). The chain is 2-C-methyl-D-erythritol 4-phosphate cytidylyltransferase from Microcystis aeruginosa (strain NIES-843 / IAM M-2473).